A 228-amino-acid chain; its full sequence is Cytochrome c oxidase subunit 2 (228 aa).

The Mitochondrial intermembrane segment spans residues 1–14 (MANHSQLGFQDASS). Residues 15-45 (PIMEELVEFHDHALIVALAICSLVLYLLAHM) traverse the membrane as a helical segment. The Mitochondrial matrix segment spans residues 46–58 (LMEKLSSNAVDAQ). Residues 59–86 (EVELIWTILPAIVLVLLALPSLQILYMM) traverse the membrane as a helical segment. At 87 to 228 (DEIDEPDLTL…EAWSSLLSSS (142 aa)) the chain is on the mitochondrial intermembrane side. H160, C195, E197, C199, H203, and M206 together coordinate Cu cation. E197 is a binding site for Mg(2+).

It belongs to the cytochrome c oxidase subunit 2 family. Component of the cytochrome c oxidase (complex IV, CIV), a multisubunit enzyme composed of 14 subunits. The complex is composed of a catalytic core of 3 subunits MT-CO1, MT-CO2 and MT-CO3, encoded in the mitochondrial DNA, and 11 supernumerary subunits COX4I, COX5A, COX5B, COX6A, COX6B, COX6C, COX7A, COX7B, COX7C, COX8 and NDUFA4, which are encoded in the nuclear genome. The complex exists as a monomer or a dimer and forms supercomplexes (SCs) in the inner mitochondrial membrane with NADH-ubiquinone oxidoreductase (complex I, CI) and ubiquinol-cytochrome c oxidoreductase (cytochrome b-c1 complex, complex III, CIII), resulting in different assemblies (supercomplex SCI(1)III(2)IV(1) and megacomplex MCI(2)III(2)IV(2)). Found in a complex with TMEM177, COA6, COX18, COX20, SCO1 and SCO2. Interacts with TMEM177 in a COX20-dependent manner. Interacts with COX20. Interacts with COX16. Cu cation is required as a cofactor.

It localises to the mitochondrion inner membrane. The enzyme catalyses 4 Fe(II)-[cytochrome c] + O2 + 8 H(+)(in) = 4 Fe(III)-[cytochrome c] + 2 H2O + 4 H(+)(out). Component of the cytochrome c oxidase, the last enzyme in the mitochondrial electron transport chain which drives oxidative phosphorylation. The respiratory chain contains 3 multisubunit complexes succinate dehydrogenase (complex II, CII), ubiquinol-cytochrome c oxidoreductase (cytochrome b-c1 complex, complex III, CIII) and cytochrome c oxidase (complex IV, CIV), that cooperate to transfer electrons derived from NADH and succinate to molecular oxygen, creating an electrochemical gradient over the inner membrane that drives transmembrane transport and the ATP synthase. Cytochrome c oxidase is the component of the respiratory chain that catalyzes the reduction of oxygen to water. Electrons originating from reduced cytochrome c in the intermembrane space (IMS) are transferred via the dinuclear copper A center (CU(A)) of subunit 2 and heme A of subunit 1 to the active site in subunit 1, a binuclear center (BNC) formed by heme A3 and copper B (CU(B)). The BNC reduces molecular oxygen to 2 water molecules using 4 electrons from cytochrome c in the IMS and 4 protons from the mitochondrial matrix. This chain is Cytochrome c oxidase subunit 2 (MT-CO2), found in Anas platyrhynchos (Mallard).